Reading from the N-terminus, the 239-residue chain is MATPHINAEMGDFADVVLMPGDPLRAKYIAETFLEDVVQVCDVRNMYGFTGTYKGRKVSVMGHGMGIPSCSIYATELIKDYGVKKIIRVGSCGAVSTDIKVRDVVIGMGACTDSKVNRIRFKGHDFAAIADYKMVKAAEEAAKARGIDVKVGNLFSAELFYTPDPEMFDVMDKYGIVGVEMEAAGIYGVAAEYGAKALTICTVSDHIKTGEQTTSEERQNTFNDMMIVALDSVLLGDAE.

His-5 contributes to the a purine D-ribonucleoside binding site. Residues Gly-21, Arg-25, Arg-44, and 88–91 each bind phosphate; that span reads RVGS. A purine D-ribonucleoside-binding positions include 180–182 and 204–205; these read EME and SD. Asp-205 acts as the Proton donor in catalysis.

Belongs to the PNP/UDP phosphorylase family. In terms of assembly, homohexamer; trimer of homodimers.

It catalyses the reaction a purine D-ribonucleoside + phosphate = a purine nucleobase + alpha-D-ribose 1-phosphate. It carries out the reaction a purine 2'-deoxy-D-ribonucleoside + phosphate = a purine nucleobase + 2-deoxy-alpha-D-ribose 1-phosphate. In terms of biological role, catalyzes the reversible phosphorolytic breakdown of the N-glycosidic bond in the beta-(deoxy)ribonucleoside molecules, with the formation of the corresponding free purine bases and pentose-1-phosphate. The chain is Purine nucleoside phosphorylase DeoD-type 1 from Vibrio vulnificus (strain CMCP6).